A 2677-amino-acid chain; its full sequence is Probable helicase senataxin (2677 aa).

Lys339 participates in a covalent cross-link: Glycyl lysine isopeptide (Lys-Gly) (interchain with G-Cter in SUMO1). A phosphoserine mark is found at Ser615, Ser642, and Ser878. A Glycyl lysine isopeptide (Lys-Gly) (interchain with G-Cter in SUMO2) cross-link involves residue Lys894. Ser911, Ser947, Ser956, Ser1017, and Ser1019 each carry phosphoserine. Residues Lys1056 and Lys1063 each participate in a glycyl lysine isopeptide (Lys-Gly) (interchain with G-Cter in SUMO2) cross-link. Disordered stretches follow at residues 1158 to 1219 (KKPK…TTVS) and 1237 to 1258 (PVSK…RSSN). Over residues 1176 to 1187 (PSSSVRNEGQSD) the composition is skewed to polar residues. Positions 1188-1205 (TNKRDLVGNDFKSIDRRT) are enriched in basic and acidic residues. Over residues 1206–1219 (STPNSRIQRATTVS) the composition is skewed to polar residues. Ser1330 bears the Phosphoserine mark. Residues Lys1340 and Lys1341 each participate in a glycyl lysine isopeptide (Lys-Gly) (interchain with G-Cter in SUMO2) cross-link. The segment at 1351-1385 (QRQIRPKSQKNRRRLSDCESTDVKRAGSHTAQNSD) is disordered. Residues 1354–1363 (IRPKSQKNRR) show a composition bias toward basic residues. Positions 1364 to 1375 (RLSDCESTDVKR) are enriched in basic and acidic residues. Ser1366 bears the Phosphoserine mark. Lys1415 participates in a covalent cross-link: Glycyl lysine isopeptide (Lys-Gly) (interchain with G-Cter in SUMO2). Position 1489 is a phosphoserine (Ser1489). The segment at 1579–1604 (FRKPGLPPPASKPLRPTTKIFSSKST) is disordered. Ser1621, Ser1623, and Ser1663 each carry phosphoserine. 1963–1970 (GPPGTGKS) lines the ATP pocket. The Bipartite nuclear localization signal signature appears at 2070-2087 (KKELPSHVQAMHKRKEFL). A coiled-coil region spans residues 2105–2136 (REIQRQELDENISKVSKERQELASKIKEVQGR). Phosphothreonine is present on Thr2474. Disordered stretches follow at residues 2474 to 2496 (THPP…SKLD), 2556 to 2577 (WDPQ…EPGF), and 2597 to 2677 (LSSH…RKLL). The span at 2560 to 2573 (PSSPQHPGATPPTG) shows a compositional bias: pro residues. Basic and acidic residues predominate over residues 2628 to 2671 (ELCHRREARAFSEGEQEKCGSETHHTRRNSRWDKRTLEQEDSSS). The interval 2661–2677 (KRTLEQEDSSSKKRKLL) is necessary for nuclear localization.

Belongs to the DNA2/NAM7 helicase family. In terms of assembly, homodimer. Interacts with PER2; the interaction inhibits termination of circadian target genes. Interacts with CHD4, POLR2A, PRKDC and TRIM28. Interacts with UBE2I. Interacts (via N-terminus domain) with EXOSC9 (via C-terminus region); the interaction enhances SETX sumoylation. Interacts with NCL (via N-terminus domain). Interacts with PABPN1, PABPC1 and SF3B1. Interacts with SMN1/SMN2 and POLR2A; SMN1/SMN2 recruits SETX to POLR2A. In terms of processing, ubiquitinated. Post-translationally, sumoylated preferentially with SUMO2 or SUMO3. Highly expressed in skeletal muscle. Expressed in heart, fibroblast, placenta and liver. Weakly expressed in brain and lung. Expressed in the cortex of the kidney (highly expressed in tubular epithelial cells but low expression in the glomerulus).

It is found in the nucleus. The protein resides in the nucleoplasm. It localises to the nucleolus. Its subcellular location is the cytoplasm. The protein localises to the chromosome. It is found in the telomere. The protein resides in the cell projection. It localises to the axon. Its subcellular location is the growth cone. Its function is as follows. Probable RNA/DNA helicase involved in diverse aspects of RNA metabolism and genomic integrity. Plays a role in transcription regulation by its ability to modulate RNA Polymerase II (Pol II) binding to chromatin and through its interaction with proteins involved in transcription. Contributes to the mRNA splicing efficiency and splice site selection. Required for the resolution of R-loop RNA-DNA hybrid formation at G-rich pause sites located downstream of the poly(A) site, allowing XRN2 recruitment and XRN2-mediated degradation of the downstream cleaved RNA and hence efficient RNA polymerase II (RNAp II) transcription termination. Required for the 3' transcriptional termination of PER1 and CRY2, thus playing an important role in the circadian rhythm regulation. Involved in DNA double-strand breaks damage response generated by oxidative stress. In association with RRP45, targets the RNA exosome complex to sites of transcription-induced DNA damage. Plays a role in the development and maturation of germ cells: essential for male meiosis, acting at the interface of transcription and meiotic recombination, and in the process of gene silencing during meiotic sex chromosome inactivation (MSCI). May be involved in telomeric stability through the regulation of telomere repeat-containing RNA (TERRA) transcription. Plays a role in neurite outgrowth in hippocampal cells through FGF8-activated signaling pathways. Inhibits retinoic acid-induced apoptosis. This is Probable helicase senataxin from Homo sapiens (Human).